We begin with the raw amino-acid sequence, 919 residues long: MGEVAGGAAPGPPRSGLVSIIIGAEDEDFENELEANPEDQNSQFQSLEQVKRRPAHLMALLQHVALQFEPGPLLCCLHADMLSSLGPKEAKKAFLDFYHSFLEKTAVLRVPVPPSVAFELDRTRPDLISEDVQRRFIQEVVQSQQAAVTRQLEDFRSKRLMGMTPWEQELSLLEPWIGKDRGNYEARERHVAERLLSHLEEMQHTISTDEEKSAAVVTAISLYMRHLGVRTKSGDKKSGRNFFRKKVMGNRRSDEPPKTKKGLSSILDPARWNRGEPSAPDCRHLKVEVDEKPGPADRKGSLGISSRDRTVGTPGQDNPGVSLHPLSVDSLDSREPGVDTPQEPGDTPPQGPTSLEPLAPPESTEDNGETESPEPGDDGEPGRSGLEQEPEEPPGWRELVPSDTLLGLPKNQVKRQEVISELLVTEAAHVRMLRVLHDLFYQPMAEGGFFPLEELQNIFPSLDELIEVHSLFLDRLMKRRQESGYLIEEIGDVLLARFDGAEGSWFQKISSRFCSRQSFALEQLKAKQRKEPRFCAFVQEAESRPRCRRLQLKDMIPTEMQRLTKYPLLLQSIGQNTEEPAERAKVELAAECCREILHHVNQAVRDMEDLLRLKDYQRRLDLTHLRQSNDPMLSEFKNLDITKKKLVHEGPLTWRLTKDKAVEVHVLLLDDLLLLLQRQDEGCCSSHTSRTLTPTPDGKTMLRPVLRLTSAMTREVATDHKAFYVIFTWDQEAQIYELVAQTSSERKSWCALITETAGSLKVPAPASRPKPRPSPSSTREPLLSSSENGTGGTEAAPADARTERILNDLLPFCRPGPEGQLAATALQKVLSLKQILLSTEEDSGAGPPRDGDGVPGGGAPGPTHTQEVEENLLSLEVVIKQLEELEEEFCRLRPFLSQLGEILSPNLAAPERSAQTGLS.

In terms of domain architecture, RGSL spans 39–230; that stretch reads DQNSQFQSLE…SLYMRHLGVR (192 aa). The tract at residues 247 to 402 is disordered; sequence VMGNRRSDEP…PPGWRELVPS (156 aa). Basic and acidic residues predominate over residues 281 to 310; that stretch reads DCRHLKVEVDEKPGPADRKGSLGISSRDRT. A compositionally biased stretch (acidic residues) spans 363 to 379; the sequence is STEDNGETESPEPGDDG. Residue Ser-372 is modified to Phosphoserine. A DH domain is found at 414–603; it reads KRQEVISELL…REILHHVNQA (190 aa). The region spanning 645–758 is the PH domain; that stretch reads KLVHEGPLTW…WCALITETAG (114 aa). The residue at position 693 (Thr-693) is a Phosphothreonine. Position 736 is a phosphotyrosine; by JAK2 (Tyr-736). Disordered stretches follow at residues 761-800 and 839-865; these read KVPA…PADA and TEED…PTHT. Residues 775–787 show a composition bias toward low complexity; that stretch reads PSSTREPLLSSSE. Residues 864–893 adopt a coiled-coil conformation; that stretch reads HTQEVEENLLSLEVVIKQLEELEEEFCRLR. Ser-904 carries the phosphoserine modification.

Interacts with RHOA, GNA12 and GNA13. Homooligomerizes through the coiled coil region. Interacts with CTNNAL1. May interact with CCPG1. In terms of processing, phosphorylated by PKCA. Angiotensin-2 induced Tyr-736 phosphorylation is mediated by JAK2.

The protein resides in the cytoplasm. It is found in the membrane. In terms of biological role, seems to play a role in the regulation of RhoA GTPase by guanine nucleotide-binding alpha-12 (GNA12) and alpha-13 (GNA13) subunits. Acts as a GTPase-activating protein (GAP) for GNA12 and GNA13, and as guanine nucleotide exchange factor (GEF) for RhoA GTPase. Activated G alpha 13/GNA13 stimulates the RhoGEF activity through interaction with the RGS-like domain. This GEF activity is inhibited by binding to activated GNA12. Mediates angiotensin-2-induced RhoA activation. In lymphoid follicles, may trigger activation of GNA13 as part of S1PR2-dependent signaling pathway that leads to inhibition of germinal center (GC) B cell growth and migration outside the GC niche. This chain is Rho guanine nucleotide exchange factor 1 (Arhgef1), found in Rattus norvegicus (Rat).